A 336-amino-acid polypeptide reads, in one-letter code: MKIALDAMGGDYAPLETTKGALEAIKESNITVVLVGKEEELQKILKDYEYDKSRIEIVNAEEVIEMHEHPAFAVKEKENSSIVKAIKLLKERKVDGAVSAGNTGAVMSSALLYLGRIKGIKRPAISTLIPTLTEVPSIILDIGANVDCKKEYLEQFALMGKIYMEEVFNIKDPKIALLNIGEEEGKGNQLAQETYNLLKNNPIFNFIGNVEGKDLFKGIANVIVCDGFVGNIAIKTAEGVAETLFELLSSEIKSSLWSTILGMLLKPKFKNVKKKLDYSEFGGAPLLGVDGTVIISHGRSKAKAIKNALKLAEKVVKLEINRKILEGLSKITDRGD.

This sequence belongs to the PlsX family. In terms of assembly, homodimer. Probably interacts with PlsY.

Its subcellular location is the cytoplasm. It carries out the reaction a fatty acyl-[ACP] + phosphate = an acyl phosphate + holo-[ACP]. It functions in the pathway lipid metabolism; phospholipid metabolism. In terms of biological role, catalyzes the reversible formation of acyl-phosphate (acyl-PO(4)) from acyl-[acyl-carrier-protein] (acyl-ACP). This enzyme utilizes acyl-ACP as fatty acyl donor, but not acyl-CoA. This is Phosphate acyltransferase from Dictyoglomus thermophilum (strain ATCC 35947 / DSM 3960 / H-6-12).